The primary structure comprises 442 residues: Chitinase-like protein Idgf4 (442 aa).

The N-terminal stretch at 1-21 (MKLYALFSLLVGSLAIGQISA) is a signal peptide. The region spanning 25-442 (HHLLCYYDGN…PILRQVKSKL (418 aa)) is the GH18 domain. Cys-29 and Cys-56 form a disulfide bridge. Asn-224 is a glycosylation site (N-linked (GlcNAc...) asparagine). Cys-343 and Cys-426 form a disulfide bridge.

It belongs to the glycosyl hydrolase 18 family. IDGF subfamily. Post-translationally, glycosylated. In terms of tissue distribution, primarily expressed in yolk cells and fat body. In larvae, it is expressed in the imaginal ring, the salivary duct, large salivary gland cells and weakly expressed in imaginal disks. More strongly expressed than Idgf1 and Idgf3.

It is found in the secreted. Functionally, cooperates with insulin-like peptides to stimulate the proliferation, polarization and motility of imaginal disk cells. May act by stabilizing the binding of insulin-like peptides to its receptor through a simultaneous interaction with both molecules to form a multiprotein signaling complex. This chain is Chitinase-like protein Idgf4 (Idgf4), found in Drosophila melanogaster (Fruit fly).